The following is a 297-amino-acid chain: UDP-N-acetylenolpyruvoylglucosamine reductase (297 aa).

Positions 26–191 (QTGGPAEYLA…IAATFALKAG (166 aa)) constitute an FAD-binding PCMH-type domain. Arginine 170 is an active-site residue. Serine 220 acts as the Proton donor in catalysis. Glutamate 290 is a catalytic residue.

Belongs to the MurB family. FAD serves as cofactor.

The protein resides in the cytoplasm. It carries out the reaction UDP-N-acetyl-alpha-D-muramate + NADP(+) = UDP-N-acetyl-3-O-(1-carboxyvinyl)-alpha-D-glucosamine + NADPH + H(+). The protein operates within cell wall biogenesis; peptidoglycan biosynthesis. Functionally, cell wall formation. This Lactobacillus delbrueckii subsp. bulgaricus (strain ATCC 11842 / DSM 20081 / BCRC 10696 / JCM 1002 / NBRC 13953 / NCIMB 11778 / NCTC 12712 / WDCM 00102 / Lb 14) protein is UDP-N-acetylenolpyruvoylglucosamine reductase.